A 260-amino-acid chain; its full sequence is Hydroxyethylthiazole kinase (260 aa).

Substrate is bound at residue Met-38. Arg-114 and Thr-159 together coordinate ATP. Substrate is bound at residue Gly-186.

Belongs to the Thz kinase family. Requires Mg(2+) as cofactor.

The catalysed reaction is 5-(2-hydroxyethyl)-4-methylthiazole + ATP = 4-methyl-5-(2-phosphooxyethyl)-thiazole + ADP + H(+). The protein operates within cofactor biosynthesis; thiamine diphosphate biosynthesis; 4-methyl-5-(2-phosphoethyl)-thiazole from 5-(2-hydroxyethyl)-4-methylthiazole: step 1/1. Catalyzes the phosphorylation of the hydroxyl group of 4-methyl-5-beta-hydroxyethylthiazole (THZ). This is Hydroxyethylthiazole kinase from Helicobacter pylori (strain G27).